The following is a 193-amino-acid chain: Signal peptidase I T (193 aa).

The Cytoplasmic segment spans residues 1–25; the sequence is MTEEKNTNTEKTAKKKTNTYLEWGK. Residues 26–42 traverse the membrane as a helical segment; the sequence is AIVIAVLLALLIRHFLF. The Extracellular portion of the chain corresponds to 43 to 193; the sequence is EPYLVEGSSM…FPFNEMRQTK (151 aa). Active-site residues include serine 51 and lysine 93.

The protein belongs to the peptidase S26 family.

The protein resides in the cell membrane. The enzyme catalyses Cleavage of hydrophobic, N-terminal signal or leader sequences from secreted and periplasmic proteins.. This is Signal peptidase I T (sipT) from Bacillus subtilis (strain 168).